We begin with the raw amino-acid sequence, 346 residues long: Ribosomal RNA small subunit methyltransferase H (346 aa).

Residues 47 to 49, Asp-65, Phe-92, Asp-113, and Gln-120 contribute to the S-adenosyl-L-methionine site; that span reads GGY. Positions 270 to 279 are enriched in basic and acidic residues; that stretch reads RGEAPSRRLP. The segment at 270–346 is disordered; it reads RGEAPSRRLP…ALPQRAAKGR (77 aa).

This sequence belongs to the methyltransferase superfamily. RsmH family.

It is found in the cytoplasm. It carries out the reaction cytidine(1402) in 16S rRNA + S-adenosyl-L-methionine = N(4)-methylcytidine(1402) in 16S rRNA + S-adenosyl-L-homocysteine + H(+). In terms of biological role, specifically methylates the N4 position of cytidine in position 1402 (C1402) of 16S rRNA. The sequence is that of Ribosomal RNA small subunit methyltransferase H from Methylocella silvestris (strain DSM 15510 / CIP 108128 / LMG 27833 / NCIMB 13906 / BL2).